Reading from the N-terminus, the 161-residue chain is Ribosome maturation factor RimP (161 aa).

It belongs to the RimP family.

It is found in the cytoplasm. In terms of biological role, required for maturation of 30S ribosomal subunits. The protein is Ribosome maturation factor RimP of Rickettsia felis (strain ATCC VR-1525 / URRWXCal2) (Rickettsia azadi).